Consider the following 474-residue polypeptide: tRNA-2-methylthio-N(6)-dimethylallyladenosine synthase (474 aa).

An MTTase N-terminal domain is found at 3-120 (KKLHIKTWGC…LPDMIEQVRR (118 aa)). Positions 12, 49, 83, 157, 161, and 164 each coordinate [4Fe-4S] cluster. The region spanning 143–375 (RAEGPTAFVS…QDRITQQAMR (233 aa)) is the Radical SAM core domain. The TRAM domain maps to 378–441 (RHMMGTVQRI…TNSLRGKFIR (64 aa)).

It belongs to the methylthiotransferase family. MiaB subfamily. In terms of assembly, monomer. It depends on [4Fe-4S] cluster as a cofactor.

It is found in the cytoplasm. The enzyme catalyses N(6)-dimethylallyladenosine(37) in tRNA + (sulfur carrier)-SH + AH2 + 2 S-adenosyl-L-methionine = 2-methylsulfanyl-N(6)-dimethylallyladenosine(37) in tRNA + (sulfur carrier)-H + 5'-deoxyadenosine + L-methionine + A + S-adenosyl-L-homocysteine + 2 H(+). Catalyzes the methylthiolation of N6-(dimethylallyl)adenosine (i(6)A), leading to the formation of 2-methylthio-N6-(dimethylallyl)adenosine (ms(2)i(6)A) at position 37 in tRNAs that read codons beginning with uridine. The chain is tRNA-2-methylthio-N(6)-dimethylallyladenosine synthase from Shewanella sp. (strain W3-18-1).